The chain runs to 412 residues: D-nopaline dehydrogenase (412 aa).

Belongs to the lysopine/nopaline/octopine/opine/vitopine dehydrogenases family. Homotetramer.

It carries out the reaction D-nopaline + NADP(+) + H2O = L-arginine + 2-oxoglutarate + NADPH + H(+). In Agrobacterium vitis (Rhizobium vitis), this protein is D-nopaline dehydrogenase (nos).